Reading from the N-terminus, the 156-residue chain is Photosystem I reaction center subunit XI (156 aa).

2 consecutive transmembrane segments (helical) span residues 75-95 (GGLL…SLYA) and 128-148 (FFIG…ALYF).

Belongs to the PsaL family.

Its subcellular location is the cellular thylakoid membrane. In Crocosphaera subtropica (strain ATCC 51142 / BH68) (Cyanothece sp. (strain ATCC 51142)), this protein is Photosystem I reaction center subunit XI.